Here is a 228-residue protein sequence, read N- to C-terminus: Ribosomal RNA small subunit methyltransferase G (228 aa).

S-adenosyl-L-methionine contacts are provided by residues G89, L94, 140-141 (VE), and R159.

It belongs to the methyltransferase superfamily. RNA methyltransferase RsmG family.

The protein resides in the cytoplasm. The enzyme catalyses guanosine(527) in 16S rRNA + S-adenosyl-L-methionine = N(7)-methylguanosine(527) in 16S rRNA + S-adenosyl-L-homocysteine. Functionally, specifically methylates the N7 position of guanine in position 527 of 16S rRNA. The protein is Ribosomal RNA small subunit methyltransferase G of Burkholderia cenocepacia (strain HI2424).